Here is a 194-residue protein sequence, read N- to C-terminus: ATP-dependent Clp protease proteolytic subunit (194 aa).

S98 acts as the Nucleophile in catalysis. Residue H123 is part of the active site.

Belongs to the peptidase S14 family. Fourteen ClpP subunits assemble into 2 heptameric rings which stack back to back to give a disk-like structure with a central cavity, resembling the structure of eukaryotic proteasomes.

The protein localises to the cytoplasm. The enzyme catalyses Hydrolysis of proteins to small peptides in the presence of ATP and magnesium. alpha-casein is the usual test substrate. In the absence of ATP, only oligopeptides shorter than five residues are hydrolyzed (such as succinyl-Leu-Tyr-|-NHMec, and Leu-Tyr-Leu-|-Tyr-Trp, in which cleavage of the -Tyr-|-Leu- and -Tyr-|-Trp bonds also occurs).. Functionally, cleaves peptides in various proteins in a process that requires ATP hydrolysis. Has a chymotrypsin-like activity. Plays a major role in the degradation of misfolded proteins. In Wigglesworthia glossinidia brevipalpis, this protein is ATP-dependent Clp protease proteolytic subunit.